Consider the following 342-residue polypeptide: Ribosomal RNA small subunit methyltransferase C (342 aa).

Belongs to the methyltransferase superfamily. RsmC family. In terms of assembly, monomer.

Its subcellular location is the cytoplasm. The enzyme catalyses guanosine(1207) in 16S rRNA + S-adenosyl-L-methionine = N(2)-methylguanosine(1207) in 16S rRNA + S-adenosyl-L-homocysteine + H(+). Functionally, specifically methylates the guanine in position 1207 of 16S rRNA in the 30S particle. This chain is Ribosomal RNA small subunit methyltransferase C, found in Salmonella gallinarum (strain 287/91 / NCTC 13346).